Here is a 516-residue protein sequence, read N- to C-terminus: Cytochrome P450 1A2 (516 aa).

Serine 69 carries an O-linked (GlcNAc) serine glycan. Substrate contacts are provided by residues phenylalanine 226 and aspartate 361–leucine 365. Cysteine 458 lines the heme pocket.

The protein belongs to the cytochrome P450 family. Interacts with PGRMC1; the interaction requires PGRMC1 homodimerization. Heme serves as cofactor.

It localises to the endoplasmic reticulum membrane. The protein localises to the microsome membrane. It carries out the reaction an organic molecule + reduced [NADPH--hemoprotein reductase] + O2 = an alcohol + oxidized [NADPH--hemoprotein reductase] + H2O + H(+). The enzyme catalyses 17beta-estradiol + reduced [NADPH--hemoprotein reductase] + O2 = 2-hydroxy-17beta-estradiol + oxidized [NADPH--hemoprotein reductase] + H2O + H(+). The catalysed reaction is 17beta-estradiol + reduced [NADPH--hemoprotein reductase] + O2 = 4-hydroxy-17beta-estradiol + oxidized [NADPH--hemoprotein reductase] + H2O + H(+). It catalyses the reaction estrone + reduced [NADPH--hemoprotein reductase] + O2 = 2-hydroxyestrone + oxidized [NADPH--hemoprotein reductase] + H2O + H(+). It carries out the reaction estrone + reduced [NADPH--hemoprotein reductase] + O2 = 4-hydroxyestrone + oxidized [NADPH--hemoprotein reductase] + H2O + H(+). The enzyme catalyses cholesterol + reduced [NADPH--hemoprotein reductase] + O2 = 25-hydroxycholesterol + oxidized [NADPH--hemoprotein reductase] + H2O + H(+). The catalysed reaction is all-trans-retinol + reduced [NADPH--hemoprotein reductase] + O2 = all-trans-retinal + oxidized [NADPH--hemoprotein reductase] + 2 H2O + H(+). It catalyses the reaction all-trans-retinal + reduced [NADPH--hemoprotein reductase] + O2 = all-trans-retinoate + oxidized [NADPH--hemoprotein reductase] + H2O + 2 H(+). It carries out the reaction (5Z,8Z,11Z,14Z)-eicosatetraenoate + reduced [NADPH--hemoprotein reductase] + O2 = (14R,15S)-epoxy-(5Z,8Z,11Z)-eicosatrienoate + oxidized [NADPH--hemoprotein reductase] + H2O + H(+). The enzyme catalyses (5Z,8Z,11Z,14Z)-eicosatetraenoate + reduced [NADPH--hemoprotein reductase] + O2 = (14S,15R)-epoxy-(5Z,8Z,11Z)-eicosatrienoate + oxidized [NADPH--hemoprotein reductase] + H2O + H(+). The catalysed reaction is (5Z,8Z,11Z,14Z,17Z)-eicosapentaenoate + reduced [NADPH--hemoprotein reductase] + O2 = (17R,18S)-epoxy-(5Z,8Z,11Z,14Z)-eicosatetraenoate + oxidized [NADPH--hemoprotein reductase] + H2O + H(+). It catalyses the reaction (4Z,7Z,10Z,13Z,16Z,19Z)-docosahexaenoate + reduced [NADPH--hemoprotein reductase] + O2 = (19R,20S)-epoxy-(4Z,7Z,10Z,13Z,16Z)-docosapentaenoate + oxidized [NADPH--hemoprotein reductase] + H2O + H(+). It carries out the reaction (5S)-hydroperoxy-(6E,8Z,11Z,14Z)-eicosatetraenoate = 5-oxo-(6E,8Z,11Z,14Z)-eicosatetraenoate + H2O. The enzyme catalyses (12S)-hydroperoxy-(5Z,8Z,10E,14Z)-eicosatetraenoate = 12-oxo-(5Z,8Z,10E,14Z)-eicosatetraenoate + H2O. The catalysed reaction is (15S)-hydroperoxy-(5Z,8Z,11Z,13E)-eicosatetraenoate = 15-oxo-(5Z,8Z,11Z,13E)-eicosatetraenoate + H2O. It catalyses the reaction (13S)-hydroperoxy-(9Z,11E)-octadecadienoate = 13-oxo-(9Z,11E)-octadecadienoate + H2O. It carries out the reaction (5Z,8Z,11Z,14Z)-eicosatetraenoate + reduced [NADPH--hemoprotein reductase] + O2 = 13-hydroxy-(5Z,8Z,11Z,14Z)-eicosatetraenoate + oxidized [NADPH--hemoprotein reductase] + H2O + H(+). The enzyme catalyses (5Z,8Z,11Z,14Z)-eicosatetraenoate + reduced [NADPH--hemoprotein reductase] + O2 = 19-hydroxy-(5Z,8Z,11Z,14Z)-eicosatetraenoate + oxidized [NADPH--hemoprotein reductase] + H2O + H(+). The catalysed reaction is (9Z,12Z)-octadecadienoate + reduced [NADPH--hemoprotein reductase] + O2 = 11-hydroxy-(9Z,12Z)-octadecadienoate + oxidized [NADPH--hemoprotein reductase] + H2O + H(+). It participates in cofactor metabolism; retinol metabolism. It functions in the pathway steroid metabolism; cholesterol metabolism. The protein operates within lipid metabolism; arachidonate metabolism. In terms of biological role, a cytochrome P450 monooxygenase involved in the metabolism of various endogenous substrates, including fatty acids, steroid hormones and vitamins. Mechanistically, uses molecular oxygen inserting one oxygen atom into a substrate, and reducing the second into a water molecule, with two electrons provided by NADPH via cytochrome P450 reductase (NADPH--hemoprotein reductase). Catalyzes the hydroxylation of carbon-hydrogen bonds. Exhibits high catalytic activity for the formation of hydroxyestrogens from estrone (E1) and 17beta-estradiol (E2), namely 2-hydroxy E1 and E2. Metabolizes cholesterol toward 25-hydroxycholesterol, a physiological regulator of cellular cholesterol homeostasis. May act as a major enzyme for all-trans retinoic acid biosynthesis in the liver. Catalyzes two successive oxidative transformation of all-trans retinol to all-trans retinal and then to the active form all-trans retinoic acid. Primarily catalyzes stereoselective epoxidation of the last double bond of polyunsaturated fatty acids (PUFA), displaying a strong preference for the (R,S) stereoisomer. Catalyzes bisallylic hydroxylation and omega-1 hydroxylation of PUFA. May also participate in eicosanoids metabolism by converting hydroperoxide species into oxo metabolites (lipoxygenase-like reaction, NADPH-independent). Plays a role in the oxidative metabolism of xenobiotics. Catalyzes the N-hydroxylation of heterocyclic amines and the O-deethylation of phenacetin. Metabolizes caffeine via N3-demethylation. The protein is Cytochrome P450 1A2 (CYP1A2) of Oryctolagus cuniculus (Rabbit).